The chain runs to 1415 residues: G8 domain-containing protein DDB_G0278975 (1415 aa).

The N-terminal stretch at 1–24 (MKINKIILFFFLSCLYLFSSSVSA) is a signal peptide. A run of 2 helical transmembrane segments spans residues 107–127 (INLN…GLFT) and 138–158 (LLFI…SIKI). Residues Asn245, Asn366, Asn428, Asn466, and Asn579 are each glycosylated (N-linked (GlcNAc...) asparagine). Positions 566–692 (STWPNGIIPS…YHNTWSKLSA (127 aa)) constitute a G8 domain. PbH1 repeat units lie at residues 819-841 (LKNS…TIHG) and 842-864 (TNNV…YLED). N-linked (GlcNAc...) asparagine glycans are attached at residues Asn844, Asn985, Asn1009, Asn1023, Asn1099, Asn1244, and Asn1342.

This sequence belongs to the comF family.

The protein localises to the membrane. This is G8 domain-containing protein DDB_G0278975 from Dictyostelium discoideum (Social amoeba).